The primary structure comprises 1052 residues: 3-hydroxy-3-methylglutaryl coenzyme A reductase mokG (1052 aa).

The next 6 membrane-spanning stretches (helical) occupy residues 223 to 243 (VDMA…VSLF), 253 to 273 (FWLA…GLGV), 279 to 299 (VPVD…TVGF), 349 to 369 (GWSI…GAVF), 378 to 398 (FCFL…TFYA), and 440 to 460 (WKLI…SSFF). In terms of domain architecture, SSD spans 224-403 (DMAIIGLGYL…FTFYATILCV (180 aa)). The interval 461–617 (YRIMGGFMTN…FKANQAESLT (157 aa)) is linker. The disordered stretch occupies residues 571–594 (APKESAAPAPPSSPASVPSAVPVP). Residues 584-594 (PASVPSAVPVP) show a composition bias toward low complexity. Residues 618–1044 (DDELAELCLR…LVNAHMRHNR (427 aa)) form a catalytic region. The Charge relay system role is filled by Glu734. N-linked (GlcNAc...) asparagine glycosylation occurs at Asn798. Active-site charge relay system residues include Lys867 and Asp943. His1039 serves as the catalytic Proton donor. Asn1043 carries N-linked (GlcNAc...) asparagine glycosylation.

This sequence belongs to the HMG-CoA reductase family.

The protein resides in the endoplasmic reticulum membrane. The enzyme catalyses (R)-mevalonate + 2 NADP(+) + CoA = (3S)-3-hydroxy-3-methylglutaryl-CoA + 2 NADPH + 2 H(+). It participates in polyketide biosynthesis; lovastatin biosynthesis. HMG-CoA reductase; part of the gene cluster that mediates the biosynthesis of monakolin K, also known as lovastatin, and which acts as a potent competitive inhibitor of HMG-CoA reductase. Monakolin K biosynthesis is performed in two stages. The first stage is catalyzed by the nonaketide synthase mokA, which belongs to type I polyketide synthases and catalyzes the iterative nine-step formation of the polyketide. This PKS stage is completed by the action of dehydrogenase mokE, which catalyzes the NADPH-dependent reduction of the unsaturated tetra-, penta- and heptaketide intermediates that arise during the mokA-mediated biosynthesis of the nonaketide chain and leads to dihydromonacolin L. Covalently bound dihydromonacolin L is released from mokA by the mokD esterase. Conversion of dihydromonacolin L into monacolin L and then monacolin J is subsequently performed with the participation of molecular oxygen and P450 monoogygenase mokC. Finally, mokF performs the conversion of monacoline J to monacoline K through the addition of the side-chain diketide moiety (2R)-2-methylbutanoate produced by the diketide synthase mokB. HMG-CoA reductase mokG may act as a down-regulator of monacolin K production. This chain is 3-hydroxy-3-methylglutaryl coenzyme A reductase mokG, found in Monascus pilosus (Red mold).